A 332-amino-acid polypeptide reads, in one-letter code: L-lactate dehydrogenase A chain (332 aa).

Alanine 2 carries the N-acetylalanine modification. N6-acetyllysine; alternate is present on lysine 5. N6-succinyllysine; alternate is present on lysine 5. Lysine 14 carries the N6-acetyllysine modification. Position 29–57 (29–57) interacts with NAD(+); sequence GAVGMACAISILMKDLADEVALVDVMEDK. Lysine 57 is modified (N6-acetyllysine; alternate). Residue lysine 57 forms a Glycyl lysine isopeptide (Lys-Gly) (interchain with G-Cter in SUMO2); alternate linkage. Lysine 81 carries the post-translational modification N6-acetyllysine. Arginine 106 is a substrate binding site. Lysine 118 bears the N6-acetyllysine; alternate mark. Lysine 118 bears the N6-succinyllysine; alternate mark. Residue lysine 126 is modified to N6-acetyllysine. Asparagine 138 contacts NAD(+). 2 residues coordinate substrate: asparagine 138 and arginine 169. The Proton acceptor role is filled by histidine 193. N6-acetyllysine is present on residues lysine 224 and lysine 232. A Phosphotyrosine modification is found at tyrosine 239. At lysine 243 the chain carries N6-acetyllysine. Threonine 248 is a substrate binding site. Residue threonine 309 is modified to Phosphothreonine. Lysine 318 is subject to N6-acetyllysine; alternate. At lysine 318 the chain carries N6-succinyllysine; alternate. At threonine 322 the chain carries Phosphothreonine.

This sequence belongs to the LDH/MDH superfamily. LDH family. As to quaternary structure, homotetramer. Interacts with PTEN upstream reading frame protein MP31. ISGylated.

It is found in the cytoplasm. It catalyses the reaction (S)-lactate + NAD(+) = pyruvate + NADH + H(+). It functions in the pathway fermentation; pyruvate fermentation to lactate; (S)-lactate from pyruvate: step 1/1. Its function is as follows. Interconverts simultaneously and stereospecifically pyruvate and lactate with concomitant interconversion of NADH and NAD(+). The chain is L-lactate dehydrogenase A chain (LDHA) from Bos mutus grunniens (Wild yak).